Consider the following 377-residue polypeptide: Modification methylase CviBIII (377 aa).

This sequence belongs to the N(4)/N(6)-methyltransferase family.

The enzyme catalyses a 2'-deoxyadenosine in DNA + S-adenosyl-L-methionine = an N(6)-methyl-2'-deoxyadenosine in DNA + S-adenosyl-L-homocysteine + H(+). A gamma subtype methylase that recognizes the double-stranded sequence 5'-TCGA-3' and methylates A-4 on both strands. The protein is Modification methylase CviBIII (CVIBIIIM) of Paramecium bursaria Chlorella virus NC1A (PBCV-NC1A).